We begin with the raw amino-acid sequence, 390 residues long: Tumor susceptibility gene 101 protein (390 aa).

Residue Ala-2 is modified to N-acetylalanine. The region spanning 2 to 145 is the UEV domain; that stretch reads AVSESQLKKM…GDEPPVFSRP (144 aa). The segment at 158 to 162 is interaction with CEP55; sequence PPNTS. The span at 198–214 shows a compositional bias: polar residues; it reads ATTSSQYPSQPPVTTVG. The segment at 198 to 220 is disordered; the sequence is ATTSSQYPSQPPVTTVGPSRDGT. Phosphothreonine is present on Thr-220. A coiled-coil region spans residues 235–316; sequence SDKLRWRMKE…NQSENNDIDE (82 aa). Positions 320–323 match the PTAP motif motif; sequence PTAP. The region spanning 322–390 is the SB domain; that stretch reads APLYKQILNL…RKTAGLSDLY (69 aa).

This sequence belongs to the ubiquitin-conjugating enzyme family. UEV subfamily. In terms of assembly, component of the ESCRT-I complex (endosomal sorting complex required for transport I) which consists of TSG101, VPS28, a VPS37 protein (VPS37A to -D) and MVB12A or MVB12B in a 1:1:1:1 stoichiometry. Interacts with VPS37A, VPS37B and VPS37C. Interacts with DMAP1. Interacts with ubiquitin. Interacts with stathmin, GMCL and AATF. Component of an ESCRT-I complex (endosomal sorting complex required for transport I) which consists of TSG101, VPS28, VPS37A and UBAP1 in a 1:1:1:1 stoichiometry. Interacts with HGS; the interaction mediates the association with the ESCRT-0 complex. Interacts with GGA1 and GGA3. Interacts (via UEV domain) with PDCD6IP/AIP1. Interacts with VPS28, SNF8 and VPS36. Self-associates. Interacts with MVB12A; the association appears to be mediated by the TSG101-VPS37 binary subcomplex. Interacts with VPS37D. Interacts with LRSAM1. Interacts with CEP55; the interaction is required for cytokinesis but not for viral budding. Interacts with PDCD6. Interacts with LITAF. Interacts with MGRN1. Interacts with ARRDC1; recruits TSG101 to the plasma membrane. (Microbial infection) Interacts with HIV-1 p6. As to quaternary structure, (Microbial infection) Interacts with human spumavirus Gag. In terms of assembly, (Microbial infection) Interacts with HTLV-1 Gag. (Microbial infection) Interacts with Ebola virus VP40. As to quaternary structure, (Microbial infection) Interacts with EIAV p9; the interaction has been shown in vitro. In terms of assembly, (Microbial infection) Interacts with Lassa virus protein Z. (Microbial infection) Interacts with hepatitis E virus protein ORF3. In terms of processing, monoubiquitinated at multiple sites by LRSAM1 and by MGRN1. Ubiquitination inactivates it, possibly by regulating its shuttling between an active membrane-bound protein and an inactive soluble form. Ubiquitination by MGRN1 requires the presence of UBE2D1. As to expression, heart, brain, placenta, lung, liver, skeletal, kidney and pancreas.

Its subcellular location is the cytoplasm. It localises to the early endosome membrane. The protein resides in the late endosome membrane. The protein localises to the cytoskeleton. It is found in the microtubule organizing center. Its subcellular location is the centrosome. It localises to the midbody. The protein resides in the midbody ring. The protein localises to the nucleus. In terms of biological role, component of the ESCRT-I complex, a regulator of vesicular trafficking process. Binds to ubiquitinated cargo proteins and is required for the sorting of endocytic ubiquitinated cargos into multivesicular bodies (MVBs). Mediates the association between the ESCRT-0 and ESCRT-I complex. Required for completion of cytokinesis; the function requires CEP55. May be involved in cell growth and differentiation. Acts as a negative growth regulator. Involved in the budding of many viruses through an interaction with viral proteins that contain a late-budding motif P-[ST]-A-P. This interaction is essential for viral particle budding of numerous retroviruses. Required for the exosomal release of SDCBP, CD63 and syndecan. It may also play a role in the extracellular release of microvesicles that differ from the exosomes. The protein is Tumor susceptibility gene 101 protein (TSG101) of Homo sapiens (Human).